The sequence spans 177 residues: Small ribosomal subunit protein uS5 (177 aa).

Residues 14 to 77 (LQEKLITVNR…EKARHNMIDI (64 aa)) form the S5 DRBM domain.

Belongs to the universal ribosomal protein uS5 family. In terms of assembly, part of the 30S ribosomal subunit. Contacts proteins S4 and S8.

With S4 and S12 plays an important role in translational accuracy. In terms of biological role, located at the back of the 30S subunit body where it stabilizes the conformation of the head with respect to the body. In Blochmanniella floridana, this protein is Small ribosomal subunit protein uS5.